Reading from the N-terminus, the 943-residue chain is Receptor-like kinase TMK3 (943 aa).

The signal sequence occupies residues 1–24; the sequence is MSNSHLGTLCFIISLLGLANFSLS. The Extracellular segment spans residues 25 to 482; sequence QTGLDDSTMQ…ETSKKSSNVK (458 aa). An N-linked (GlcNAc...) asparagine glycan is attached at Asn41. Residues Cys54 and Cys61 are joined by a disulfide bond. LRR repeat units lie at residues 64–88, 89–111, 112–134, 136–160, 162–183, 186–210, 212–232, 233–254, 255–279, and 281–301; these read SNRVTKIQLKQKGIRGTLPTNLQSL, SELVILELFLNRISGPIPDLSGL, SRLQTLNLHDNLFTSVPKNLFSG, SSLQEMYLENNPFDPWVIPDTVKEA, SLQNLTLSNCSIIGKIPDFFGS, LPSLTNLKLSQNGLEGELPMSFAGT, IQSLFLNGQKLNGSISVLGNM, TSLVEVSLQGNQFSGPIPDLSG, LVSLRVFNVRENQLTGVVPQSLVSL, and SLTTVNLTNNYLQGPTPLFGK. N-linked (GlcNAc...) asparagine glycans are attached at residues Asn165 and Asn170. N-linked (GlcNAc...) asparagine glycans are attached at residues Asn223 and Asn231. Residue Asn286 is glycosylated (N-linked (GlcNAc...) asparagine). 2 disulfides stabilise this stretch: Cys315–Cys323 and Cys353–Cys361. LRR repeat units follow at residues 363–386, 387–410, and 411–438; these read GGNITVVNMRKQDLSGTISPSLAK, LTSLETINLADNKLSGHIPDELTT, and LSKLRLLDVSNNDFYGIPPKFRDTVTLV. Residue Asn365 is glycosylated (N-linked (GlcNAc...) asparagine). The segment at 441–476 is disordered; that stretch reads GNANMGKNGPNKTSDAPGASPGSKPSGGSDGSETSK. The N-linked (GlcNAc...) asparagine glycan is linked to Asn451. Over residues 454–467 the composition is skewed to low complexity; the sequence is SDAPGASPGSKPSG. Residues 483–503 traverse the membrane as a helical segment; that stretch reads IIVPVVGGVVGALCLVGLGVC. Residues 504-943 lie on the Cytoplasmic side of the membrane; the sequence is LYAKKRKRPA…ADSFTSVDGR (440 aa). The disordered stretch occupies residues 514 to 534; it reads RVQSPSSNMVIHPHHSGDNDD. The 282-residue stretch at 585-866 folds into the Protein kinase domain; that stretch reads FSEENILGRG…AHIVNVLSSL (282 aa). ATP is bound by residues 591 to 599 and Lys613; that span reads LGRGGFGTV. Asp714 functions as the Proton acceptor in the catalytic mechanism. The tract at residues 904–943 is disordered; it reads QTADDSGSSSSAYGSKDNTQTSIPTRPSGFADSFTSVDGR. The span at 906-918 shows a compositional bias: low complexity; the sequence is ADDSGSSSSAYGS. Over residues 919–928 the composition is skewed to polar residues; sequence KDNTQTSIPT.

It belongs to the protein kinase superfamily. Ser/Thr protein kinase family. In terms of tissue distribution, expressed in roots, leaves, stems, siliques and flowers.

Its subcellular location is the membrane. The enzyme catalyses L-seryl-[protein] + ATP = O-phospho-L-seryl-[protein] + ADP + H(+). It carries out the reaction L-threonyl-[protein] + ATP = O-phospho-L-threonyl-[protein] + ADP + H(+). Functionally, involved in auxin signal transduction and cell expansion and proliferation regulation. This chain is Receptor-like kinase TMK3, found in Arabidopsis thaliana (Mouse-ear cress).